The chain runs to 363 residues: NAD(P)H-quinone oxidoreductase subunit 1, chloroplastic (363 aa).

A run of 6 helical transmembrane segments spans residues 30-50 (LVPI…IVWL), 98-118 (FSIG…VIPF), 129-149 (IGIF…LMSG), 248-268 (YSGI…LLSS), 300-320 (IIGT…FLFI), and 343-363 (FLLP…LLSL).

It belongs to the complex I subunit 1 family. As to quaternary structure, NDH is composed of at least 16 different subunits, 5 of which are encoded in the nucleus.

The protein resides in the plastid. It localises to the chloroplast thylakoid membrane. It carries out the reaction a plastoquinone + NADH + (n+1) H(+)(in) = a plastoquinol + NAD(+) + n H(+)(out). It catalyses the reaction a plastoquinone + NADPH + (n+1) H(+)(in) = a plastoquinol + NADP(+) + n H(+)(out). In terms of biological role, NDH shuttles electrons from NAD(P)H:plastoquinone, via FMN and iron-sulfur (Fe-S) centers, to quinones in the photosynthetic chain and possibly in a chloroplast respiratory chain. The immediate electron acceptor for the enzyme in this species is believed to be plastoquinone. Couples the redox reaction to proton translocation, and thus conserves the redox energy in a proton gradient. The polypeptide is NAD(P)H-quinone oxidoreductase subunit 1, chloroplastic (Gossypium barbadense (Sea Island cotton)).